The sequence spans 320 residues: MKITDISGKIETLVDSLRDMSPTRVRSSFSDEHVSENDDERSSWIALHPSALDMFEQIMRDAEGKQIIMFLDYDGTLSLITEDHDRAYITDEMREVVKEVATYFKTAIISGRSTDKVQSFVKLTGIHYAGSHGMDIKGPTNTDQSNQEEVMFQPASDYLPMIDEVVNVLKEKTKSIPGATVEHNKFCLTVHFRRVDETGWAALAEQVRLVLIDYPKLRLTQGRKVLELRPSIKWDKGKALEFLLNSLGIAESKDVLPVYIGDDRTDEDAFKVLCERGQGFGIIVSKTIKETYASYSLQDPSQVKEFLERLVKWKKQTLGE.

It belongs to the trehalose phosphatase family. The cofactor is a divalent metal cation.

It carries out the reaction alpha,alpha-trehalose 6-phosphate + H2O = alpha,alpha-trehalose + phosphate. The protein operates within glycan biosynthesis; trehalose biosynthesis. In terms of biological role, removes the phosphate from trehalose 6-phosphate to produce free trehalose. Trehalose accumulation in plant may improve abiotic stress tolerance. This is Probable trehalose-phosphate phosphatase C (TPPC) from Arabidopsis thaliana (Mouse-ear cress).